Consider the following 754-residue polypeptide: 5-methyltetrahydropteroyltriglutamate--homocysteine methyltransferase (754 aa).

Residues 17–20 (RELK) and Lys-117 contribute to the 5-methyltetrahydropteroyltri-L-glutamate site. Residues 431–433 (IGS) and Glu-484 contribute to the L-homocysteine site. L-methionine is bound by residues 431–433 (IGS) and Glu-484. 5-methyltetrahydropteroyltri-L-glutamate contacts are provided by residues 515–516 (RC) and Trp-561. Asp-599 is a binding site for L-homocysteine. Asp-599 provides a ligand contact to L-methionine. Glu-605 provides a ligand contact to 5-methyltetrahydropteroyltri-L-glutamate. 3 residues coordinate Zn(2+): His-641, Cys-643, and Glu-665. His-694 serves as the catalytic Proton donor. Residue Cys-726 coordinates Zn(2+).

This sequence belongs to the vitamin-B12 independent methionine synthase family. The cofactor is Zn(2+).

The enzyme catalyses 5-methyltetrahydropteroyltri-L-glutamate + L-homocysteine = tetrahydropteroyltri-L-glutamate + L-methionine. It functions in the pathway amino-acid biosynthesis; L-methionine biosynthesis via de novo pathway; L-methionine from L-homocysteine (MetE route): step 1/1. Catalyzes the transfer of a methyl group from 5-methyltetrahydrofolate to homocysteine resulting in methionine formation. The sequence is that of 5-methyltetrahydropteroyltriglutamate--homocysteine methyltransferase from Salmonella dublin (strain CT_02021853).